A 622-amino-acid polypeptide reads, in one-letter code: Dynein axonemal assembly factor 1 (622 aa).

Residues 1 to 11 show a composition bias toward polar residues; it reads MHPEVSEQQAD. Residues 1-80 are disordered; that stretch reads MHPEVSEQQA…ARNDRDDRGP (80 aa). Positions 32 to 42 are enriched in basic and acidic residues; the sequence is VRKEEINETKE. Positions 48 to 59 are enriched in low complexity; the sequence is STTSCQSQKQQS. The span at 62 to 80 shows a compositional bias: basic and acidic residues; sequence SRLECRSGYARNDRDDRGP. LRR repeat units lie at residues 101 to 123, 124 to 145, 146 to 167, 168 to 189, 190 to 211, and 215 to 236; these read ALNDTLYLHFKGFDRIENLEEYT, GLRCLWLECNGIQRIENLQAQS, ELRCLFLQVNLLHKIENLEPLQ, KLDALNLSNNYIKTIENLSCLP, VLNTLQMAHNRLETVADIQHLG, and RLCVLDLSHNMLSDPEILSVLE. Positions 249–288 constitute an LRRCT domain; that stretch reads NPVTKHIPNYRRTVTVRLKQLTYLDDRPVFPKDRACAEAW. The span at 326–336 shows a compositional bias: basic and acidic residues; the sequence is EERKKARDKGE. Positions 326-363 are disordered; that stretch reads EERKKARDKGETPLPDSEESSSTSPEAQEKPPLGETQE. The span at 337–351 shows a compositional bias: low complexity; it reads TPLPDSEESSSTSPE. Phosphoserine is present on residues serine 349, serine 464, and serine 487. 2 disordered regions span residues 481–505 and 535–622; these read SSLSDDSDPELNDSSLPMLEHTPTG and TATT…FGLD. Polar residues-rich tracts occupy residues 535 to 552 and 568 to 578; these read TATTEVETQGQVFSTTRP and EPNQSLPAQSS.

It belongs to the DNAAF1 family.

The protein resides in the cell projection. Its subcellular location is the cilium. In terms of biological role, cilium-specific protein required for the stability of the ciliary architecture. Plays a role in cytoplasmic preassembly of dynein arms. Involved in regulation of microtubule-based cilia and actin-based brush border microvilli. The sequence is that of Dynein axonemal assembly factor 1 (Dnaaf1) from Peromyscus californicus (California mouse).